Here is an 873-residue protein sequence, read N- to C-terminus: Tyrosine-protein kinase receptor TYRO3 (873 aa).

A signal peptide spans 1–28; the sequence is MELRRSMALPRLLLLGLWAAALRDGAVA. 2 consecutive Ig-like C2-type domains span residues 29-116 and 127-208; these read AGMK…KEES and PYFT…ATVQ. Over 29-416 the chain is Extracellular; that stretch reads AGMKFTGSPI…QRQPPYGTSW (388 aa). The N-linked (GlcNAc...) asparagine glycan is linked to Asn51. 2 cysteine pairs are disulfide-bonded: Cys52-Cys105 and Cys148-Cys191. N-linked (GlcNAc...) asparagine glycans are attached at residues Asn179, Asn184, Asn218, Asn228, Asn281, Asn353, and Asn367. Fibronectin type-III domains follow at residues 215–308 and 310–403; these read PPLN…TLEL and PSST…AQEV. Residues 417–437 traverse the membrane as a helical segment; the sequence is VPVALGILTALVTAVALALIL. Residues 438-873 lie on the Cytoplasmic side of the membrane; that stretch reads LRKRRKETRF…ELETEGEKSC (436 aa). The Protein kinase domain maps to 505–776; sequence FTLGRMLGKG…GVLRSQLEMI (272 aa). ATP contacts are provided by residues 511 to 519 and Lys537; that span reads LGKGEFGSV. The Proton acceptor role is filled by Asp642. The residue at position 673 (Tyr673) is a Phosphotyrosine; by autocatalysis. Positions 845-873 are disordered; that stretch reads VEGERHPEGQEGENKSLLYELETEGEKSC. A compositionally biased stretch (basic and acidic residues) spans 847-858; it reads GERHPEGQEGEN.

This sequence belongs to the protein kinase superfamily. Tyr protein kinase family. AXL/UFO subfamily. Autophosphorylated on tyrosine residues. In terms of tissue distribution, detected in embryonic retina (at protein level). detected in brain, retina, kidney and in retinal Mueller glia-like cells.

The protein resides in the cell membrane. It carries out the reaction L-tyrosyl-[protein] + ATP = O-phospho-L-tyrosyl-[protein] + ADP + H(+). Functionally, receptor tyrosine kinase that transduces signals from the extracellular matrix into the cytoplasm by binding to several ligands. Regulates many physiological processes including cell survival, migration and differentiation. Ligand binding at the cell surface induces dimerization and autophosphorylation of TYRO3 on its intracellular domain that provides docking sites for downstream signaling molecules. Following activation by ligand, enhances PI3-kinase activity and activates the AKT survival pathway, including nuclear translocation of NF-kappa-B and up-regulation of transcription of NF-kappa-B-regulated genes. This chain is Tyrosine-protein kinase receptor TYRO3 (TYRO3), found in Gallus gallus (Chicken).